Consider the following 113-residue polypeptide: MQAKAVAKSVRIAPRKVRLVVDLIRGKEVGEAIAILNHTQRGASPVVEKVLKSAIANAEHNYEMDADSLVISEAFVNEGATLKRFRPRAQGRASRINKRTSHITVVVTEKKEG.

This sequence belongs to the universal ribosomal protein uL22 family. As to quaternary structure, part of the 50S ribosomal subunit.

This protein binds specifically to 23S rRNA; its binding is stimulated by other ribosomal proteins, e.g. L4, L17, and L20. It is important during the early stages of 50S assembly. It makes multiple contacts with different domains of the 23S rRNA in the assembled 50S subunit and ribosome. Functionally, the globular domain of the protein is located near the polypeptide exit tunnel on the outside of the subunit, while an extended beta-hairpin is found that lines the wall of the exit tunnel in the center of the 70S ribosome. The protein is Large ribosomal subunit protein uL22 of Oceanobacillus iheyensis (strain DSM 14371 / CIP 107618 / JCM 11309 / KCTC 3954 / HTE831).